Reading from the N-terminus, the 247-residue chain is Homeobox-leucine zipper protein HOX17 (247 aa).

The tract at residues 58–81 is disordered; it reads ERAGLRGGGGSDEEDGGCGIDGSR. Positions 79–138 form a DNA-binding region, homeobox; that stretch reads GSRKKLRLSKDQSAVLEDSFREHPTLNPRQKATLAQQLGLRPRQVEVWFQNRRARTKLKQ. Positions 137 to 182 are leucine-zipper; that stretch reads KQTEVDCEFLKRCCETLTEENRRLQKEVQELRALKLVSPHLYMNMS.

The protein belongs to the HD-ZIP homeobox family. Class II subfamily. In terms of tissue distribution, expressed in seedlings, roots, stems, leaf sheaths and blades and panicles.

It localises to the nucleus. Functionally, probable transcription factor. This Oryza sativa subsp. indica (Rice) protein is Homeobox-leucine zipper protein HOX17 (HOX17).